The following is an 89-amino-acid chain: Small ribosomal subunit protein uS15 (89 aa).

It belongs to the universal ribosomal protein uS15 family. In terms of assembly, part of the 30S ribosomal subunit. Forms a bridge to the 50S subunit in the 70S ribosome, contacting the 23S rRNA.

Its function is as follows. One of the primary rRNA binding proteins, it binds directly to 16S rRNA where it helps nucleate assembly of the platform of the 30S subunit by binding and bridging several RNA helices of the 16S rRNA. Functionally, forms an intersubunit bridge (bridge B4) with the 23S rRNA of the 50S subunit in the ribosome. The protein is Small ribosomal subunit protein uS15 of Renibacterium salmoninarum (strain ATCC 33209 / DSM 20767 / JCM 11484 / NBRC 15589 / NCIMB 2235).